A 221-amino-acid polypeptide reads, in one-letter code: ATP phosphoribosyltransferase (221 aa).

Belongs to the ATP phosphoribosyltransferase family. Short subfamily. As to quaternary structure, heteromultimer composed of HisG and HisZ subunits.

Its subcellular location is the cytoplasm. It catalyses the reaction 1-(5-phospho-beta-D-ribosyl)-ATP + diphosphate = 5-phospho-alpha-D-ribose 1-diphosphate + ATP. The protein operates within amino-acid biosynthesis; L-histidine biosynthesis; L-histidine from 5-phospho-alpha-D-ribose 1-diphosphate: step 1/9. Functionally, catalyzes the condensation of ATP and 5-phosphoribose 1-diphosphate to form N'-(5'-phosphoribosyl)-ATP (PR-ATP). Has a crucial role in the pathway because the rate of histidine biosynthesis seems to be controlled primarily by regulation of HisG enzymatic activity. This is ATP phosphoribosyltransferase from Carboxydothermus hydrogenoformans (strain ATCC BAA-161 / DSM 6008 / Z-2901).